Here is a 76-residue protein sequence, read N- to C-terminus: Defensin-like protein 71 (76 aa).

An N-terminal signal peptide occupies residues 1–22; sequence MAMTQVFVIFILLATSLCNSNA. Disulfide bonds link Cys-36/Cys-74, Cys-40/Cys-63, Cys-49/Cys-72, and Cys-53/Cys-73.

This sequence belongs to the DEFL family.

It localises to the secreted. This Arabidopsis thaliana (Mouse-ear cress) protein is Defensin-like protein 71 (LCR84).